The chain runs to 240 residues: 2,3-bisphosphoglycerate-dependent phosphoglycerate mutase 2 (240 aa).

Substrate-binding positions include 8 to 15 (RHGQSEWN), 21 to 22 (TG), R60, 87 to 90 (ERHY), K98, 114 to 115 (RR), and 183 to 184 (GN). The Tele-phosphohistidine intermediate role is filled by H9. The active-site Proton donor/acceptor is the E87.

Belongs to the phosphoglycerate mutase family. BPG-dependent PGAM subfamily.

It catalyses the reaction (2R)-2-phosphoglycerate = (2R)-3-phosphoglycerate. It participates in carbohydrate degradation; glycolysis; pyruvate from D-glyceraldehyde 3-phosphate: step 3/5. Functionally, catalyzes the interconversion of 2-phosphoglycerate and 3-phosphoglycerate. In Bacillus cereus (strain ATCC 10987 / NRS 248), this protein is 2,3-bisphosphoglycerate-dependent phosphoglycerate mutase 2.